We begin with the raw amino-acid sequence, 612 residues long: UvrABC system protein C (612 aa).

The GIY-YIG domain maps to 20 to 98; it reads THSGVYRMLD…IKQHRPKYNI (79 aa). One can recognise a UVR domain in the interval 208–243; that stretch reads SSVLEEISAKMYQASEDMEYEKAQVYRDQLVVLRKL.

This sequence belongs to the UvrC family. Interacts with UvrB in an incision complex.

The protein localises to the cytoplasm. The UvrABC repair system catalyzes the recognition and processing of DNA lesions. UvrC both incises the 5' and 3' sides of the lesion. The N-terminal half is responsible for the 3' incision and the C-terminal half is responsible for the 5' incision. In Francisella tularensis subsp. tularensis (strain FSC 198), this protein is UvrABC system protein C.